The sequence spans 216 residues: Maleylacetoacetate isomerase (216 aa).

The residue at position 1 (Met1) is an N-acetylmethionine. The 84-residue stretch at 4–87 (GKPILYSYFR…YLEETRPIPR (84 aa)) folds into the GST N-terminal domain. Glutathione is bound by residues 14 to 19 (SSCSWR) and Gln45. Position 57 is an N6-succinyllysine (Lys57). Residues Val59, 71-72 (QS), Gln111, and 115-117 (NLS) each bind glutathione. One can recognise a GST C-terminal domain in the interval 92 to 212 (DPQKRAIVRM…HPRRQPDTPA (121 aa)). Thr136 carries the post-translational modification Phosphothreonine. Phosphoserine is present on Ser137. Lys177 carries the N6-succinyllysine modification. At Ser181 the chain carries Phosphoserine.

It belongs to the GST superfamily. Zeta family. In terms of assembly, homodimer. It depends on glutathione as a cofactor. In terms of tissue distribution, expressed in liver, kidney, seminal glands and breast.

It localises to the cytoplasm. The catalysed reaction is 4-maleylacetoacetate = 4-fumarylacetoacetate. It catalyses the reaction RX + glutathione = an S-substituted glutathione + a halide anion + H(+). It participates in amino-acid degradation; L-phenylalanine degradation; acetoacetate and fumarate from L-phenylalanine: step 5/6. Functionally, probable bifunctional enzyme showing minimal glutathione-conjugating activity with ethacrynic acid and 7-chloro-4-nitrobenz-2-oxa-1, 3-diazole and maleylacetoacetate isomerase activity. Also has low glutathione peroxidase activity with t-butyl and cumene hydroperoxides. Is able to catalyze the glutathione dependent oxygenation of dichloroacetic acid to glyoxylic acid. The protein is Maleylacetoacetate isomerase (Gstz1) of Mus musculus (Mouse).